Reading from the N-terminus, the 364-residue chain is Pre-small/secreted glycoprotein (364 aa).

The signal sequence occupies residues 1–32 (MGVTGILQLPRDRFKRTSFFLWVIILFQRTFS). Asn-40 carries N-linked (GlcNAc...) asparagine; by host glycosylation. Intrachain disulfides connect Cys-108-Cys-135 and Cys-121-Cys-147. N-linked (GlcNAc...) asparagine; by host glycans are attached at residues Asn-204, Asn-228, Asn-238, Asn-257, and Asn-268.

This sequence belongs to the filoviruses glycoprotein family. As to quaternary structure, homodimer; disulfide-linked. The homodimers are linked by two disulfide bonds in a parallel orientation. Monomer. In terms of processing, this precursor is processed into mature sGP and delta-peptide by host furin or furin-like proteases. The cleavage site corresponds to the furin optimal cleavage sequence [KR]-X-[KR]-R. N-glycosylated. Post-translationally, O-glycosylated.

The protein resides in the secreted. Seems to possess an anti-inflammatory activity as it can reverse the barrier-decreasing effects of TNF alpha. Might therefore contribute to the lack of inflammatory reaction seen during infection in spite the of extensive necrosis and massive virus production. Does not seem to be involved in activation of primary macrophages. Does not seem to interact specifically with neutrophils. Functionally, viroporin that permeabilizes mammalian cell plasma membranes. It acts by altering permeation of ionic compounds and small molecules. This activity may lead to viral enterotoxic activity. In Zaire ebolavirus (strain Gabon-94) (ZEBOV), this protein is Pre-small/secreted glycoprotein (GP).